Reading from the N-terminus, the 541-residue chain is GTPase Obg (541 aa).

Residues 2 to 159 (PTFVDRVVLH…LDAVLELKSV (158 aa)) enclose the Obg domain. A disordered region spans residues 63–84 (HPHQRAGGGRPGQGSNRHGADG). One can recognise an OBG-type G domain in the interval 160 to 332 (ADVALVGFPS…LALALAELVA (173 aa)). GTP-binding positions include 166 to 173 (GFPSAGKS), 191 to 195 (FTTLV), 213 to 216 (DVPG), 284 to 287 (NKVD), and 313 to 315 (STA). 2 residues coordinate Mg(2+): S173 and T193. Residues 350–427 (PRAVDEPDFT…IGAVTFDWEP (78 aa)) enclose the OCT domain. A disordered region spans residues 497–541 (KRLTRAQRTALSDSADDFDDGAGFSDSAAFGDSGGSGGDADGGRG). Residues 517–527 (GAGFSDSAAFG) are compositionally biased toward low complexity. Residues 528 to 541 (DSGGSGGDADGGRG) are compositionally biased toward gly residues.

It belongs to the TRAFAC class OBG-HflX-like GTPase superfamily. OBG GTPase family. As to quaternary structure, monomer. Mg(2+) is required as a cofactor.

It is found in the cytoplasm. Functionally, an essential GTPase which binds GTP, GDP and possibly (p)ppGpp with moderate affinity, with high nucleotide exchange rates and a fairly low GTP hydrolysis rate. Plays a role in control of the cell cycle, stress response, ribosome biogenesis and in those bacteria that undergo differentiation, in morphogenesis control. The sequence is that of GTPase Obg from Parafrankia sp. (strain EAN1pec).